The sequence spans 244 residues: Dihydropteridine reductase (244 aa).

Ala2 carries the post-translational modification N-acetylalanine. Residue 14–38 participates in NADP(+) binding; that stretch reads LVYGGRGALGSRCVQAFRARNWWVA. Lys73, Lys79, Lys96, and Lys102 each carry N6-succinyllysine. Tyr150 serves as the catalytic Proton acceptor.

The protein belongs to the short-chain dehydrogenases/reductases (SDR) family. As to quaternary structure, homodimer.

It carries out the reaction 5,6,7,8-tetrahydropteridine + NAD(+) = 6,7-dihydropteridine + NADH + H(+). It catalyses the reaction 5,6,7,8-tetrahydropteridine + NADP(+) = 6,7-dihydropteridine + NADPH + H(+). Its function is as follows. Catalyzes the conversion of quinonoid dihydrobiopterin into tetrahydrobiopterin. The protein is Dihydropteridine reductase (QDPR) of Homo sapiens (Human).